A 511-amino-acid polypeptide reads, in one-letter code: Probable mannosyl-oligosaccharide alpha-1,2-mannosidase 1B (511 aa).

An N-terminal signal peptide occupies residues 1–18 (MHLPSLSLAWALAGSSLA). Residues Asn-90 and Asn-177 are each glycosylated (N-linked (GlcNAc...) asparagine). Residues Cys-327 and Cys-356 are joined by a disulfide bond. Glu-370 functions as the Proton donor in the catalytic mechanism. Asn-433 carries an N-linked (GlcNAc...) asparagine glycan. Residue Thr-501 participates in Ca(2+) binding.

Belongs to the glycosyl hydrolase 47 family. In terms of assembly, monomer. Requires Ca(2+) as cofactor. Mg(2+) serves as cofactor.

It localises to the cytoplasmic vesicle lumen. The catalysed reaction is N(4)-(alpha-D-Man-(1-&gt;2)-alpha-D-Man-(1-&gt;2)-alpha-D-Man-(1-&gt;3)-[alpha-D-Man-(1-&gt;2)-alpha-D-Man-(1-&gt;3)-[alpha-D-Man-(1-&gt;2)-alpha-D-Man-(1-&gt;6)]-alpha-D-Man-(1-&gt;6)]-beta-D-Man-(1-&gt;4)-beta-D-GlcNAc-(1-&gt;4)-beta-D-GlcNAc)-L-asparaginyl-[protein] (N-glucan mannose isomer 9A1,2,3B1,2,3) + 4 H2O = N(4)-(alpha-D-Man-(1-&gt;3)-[alpha-D-Man-(1-&gt;3)-[alpha-D-Man-(1-&gt;6)]-alpha-D-Man-(1-&gt;6)]-beta-D-Man-(1-&gt;4)-beta-D-GlcNAc-(1-&gt;4)-beta-D-GlcNAc)-L-asparaginyl-[protein] (N-glucan mannose isomer 5A1,2) + 4 beta-D-mannose. The enzyme catalyses N(4)-(alpha-D-Man-(1-&gt;2)-alpha-D-Man-(1-&gt;2)-alpha-D-Man-(1-&gt;3)-[alpha-D-Man-(1-&gt;3)-[alpha-D-Man-(1-&gt;2)-alpha-D-Man-(1-&gt;6)]-alpha-D-Man-(1-&gt;6)]-beta-D-Man-(1-&gt;4)-beta-D-GlcNAc-(1-&gt;4)-beta-D-GlcNAc)-L-asparaginyl-[protein] (N-glucan mannose isomer 8A1,2,3B1,3) + 3 H2O = N(4)-(alpha-D-Man-(1-&gt;3)-[alpha-D-Man-(1-&gt;3)-[alpha-D-Man-(1-&gt;6)]-alpha-D-Man-(1-&gt;6)]-beta-D-Man-(1-&gt;4)-beta-D-GlcNAc-(1-&gt;4)-beta-D-GlcNAc)-L-asparaginyl-[protein] (N-glucan mannose isomer 5A1,2) + 3 beta-D-mannose. It participates in protein modification; protein glycosylation. Functionally, involved in the maturation of Asn-linked oligosaccharides. Progressively trims alpha-1,2-linked mannose residues from Man(9)GlcNAc(2) to produce Man(5)GlcNAc(2). In Aspergillus clavatus (strain ATCC 1007 / CBS 513.65 / DSM 816 / NCTC 3887 / NRRL 1 / QM 1276 / 107), this protein is Probable mannosyl-oligosaccharide alpha-1,2-mannosidase 1B (mns1B).